A 280-amino-acid chain; its full sequence is Diaminopimelate epimerase (280 aa).

Positions 13 and 64 each coordinate substrate. Catalysis depends on Cys-73, which acts as the Proton donor. Substrate is bound by residues 74-75, Asn-164, Asn-197, and 215-216; these read GN and ER. The Proton acceptor role is filled by Cys-224. 225–226 provides a ligand contact to substrate; sequence GT.

The protein belongs to the diaminopimelate epimerase family. Homodimer.

It localises to the cytoplasm. It catalyses the reaction (2S,6S)-2,6-diaminopimelate = meso-2,6-diaminopimelate. Its pathway is amino-acid biosynthesis; L-lysine biosynthesis via DAP pathway; DL-2,6-diaminopimelate from LL-2,6-diaminopimelate: step 1/1. In terms of biological role, catalyzes the stereoinversion of LL-2,6-diaminopimelate (L,L-DAP) to meso-diaminopimelate (meso-DAP), a precursor of L-lysine and an essential component of the bacterial peptidoglycan. This chain is Diaminopimelate epimerase, found in Leptospira biflexa serovar Patoc (strain Patoc 1 / Ames).